The sequence spans 410 residues: Protein trichome birefringence-like 34 (410 aa).

Residues 13–33 (TSFHTIAAVLVAGLIFTAVFL) traverse the membrane as a helical; Signal-anchor for type II membrane protein segment. The short motif at 133–135 (GDS) is the GDS motif element. Residues 383–397 (DCIHWCLPGVPDVWN) carry the DCXHWCLPGXXDXWN motif motif.

It belongs to the PC-esterase family. TBL subfamily.

It is found in the golgi apparatus membrane. May act as a bridging protein that binds pectin and other cell wall polysaccharides. Probably involved in maintaining esterification of pectins. May be involved in the specific O-acetylation of cell wall polymers. The sequence is that of Protein trichome birefringence-like 34 (TBL34) from Arabidopsis thaliana (Mouse-ear cress).